The chain runs to 195 residues: dTTP/UTP pyrophosphatase (195 aa).

Asp-77 functions as the Proton acceptor in the catalytic mechanism.

Belongs to the Maf family. YhdE subfamily. It depends on a divalent metal cation as a cofactor.

The protein resides in the cytoplasm. It catalyses the reaction dTTP + H2O = dTMP + diphosphate + H(+). The catalysed reaction is UTP + H2O = UMP + diphosphate + H(+). Nucleoside triphosphate pyrophosphatase that hydrolyzes dTTP and UTP. May have a dual role in cell division arrest and in preventing the incorporation of modified nucleotides into cellular nucleic acids. The chain is dTTP/UTP pyrophosphatase from Flavobacterium psychrophilum (strain ATCC 49511 / DSM 21280 / CIP 103535 / JIP02/86).